Here is a 255-residue protein sequence, read N- to C-terminus: PABIR family member 2 (255 aa).

Residues 1-24 (MAQEKMDLDFEADTSEGATLRRSN) are disordered. Alanine 2 is modified (N-acetylalanine). 4 positions are modified to phosphoserine: serine 25, serine 33, serine 50, and serine 58. Threonine 112 carries the phosphothreonine modification. Serine 115 and serine 119 each carry phosphoserine. An Omega-N-methylarginine modification is found at arginine 122. Residue serine 145 is modified to Phosphoserine. Disordered regions lie at residues 169–196 (LGPLKRKGEMEMESQPKRPFQGTTSMLS) and 219–238 (SGLSSDSLATGSAPAESPVA). Residues 174 to 184 (RKGEMEMESQP) are compositionally biased toward basic and acidic residues.

This sequence belongs to the FAM122 family.

The polypeptide is PABIR family member 2 (Mus musculus (Mouse)).